Consider the following 206-residue polypeptide: Guanylate kinase (206 aa).

One can recognise a Guanylate kinase-like domain in the interval 13–193 (PLLLVVSGPS…AVSEIMSIIS (181 aa)). 20-27 (GPSGVGKD) lines the ATP pocket.

Belongs to the guanylate kinase family.

It localises to the cytoplasm. The catalysed reaction is GMP + ATP = GDP + ADP. Essential for recycling GMP and indirectly, cGMP. The chain is Guanylate kinase from Dehalococcoides mccartyi (strain ATCC BAA-2266 / KCTC 15142 / 195) (Dehalococcoides ethenogenes (strain 195)).